Reading from the N-terminus, the 208-residue chain is Protein-L-isoaspartate O-methyltransferase (208 aa).

Residue S59 is part of the active site.

It belongs to the methyltransferase superfamily. L-isoaspartyl/D-aspartyl protein methyltransferase family.

It localises to the cytoplasm. It carries out the reaction [protein]-L-isoaspartate + S-adenosyl-L-methionine = [protein]-L-isoaspartate alpha-methyl ester + S-adenosyl-L-homocysteine. Catalyzes the methyl esterification of L-isoaspartyl residues in peptides and proteins that result from spontaneous decomposition of normal L-aspartyl and L-asparaginyl residues. It plays a role in the repair and/or degradation of damaged proteins. This is Protein-L-isoaspartate O-methyltransferase from Escherichia fergusonii (strain ATCC 35469 / DSM 13698 / CCUG 18766 / IAM 14443 / JCM 21226 / LMG 7866 / NBRC 102419 / NCTC 12128 / CDC 0568-73).